Reading from the N-terminus, the 241-residue chain is 2-C-methyl-D-erythritol 4-phosphate cytidylyltransferase (241 aa).

This sequence belongs to the IspD/TarI cytidylyltransferase family. IspD subfamily.

It carries out the reaction 2-C-methyl-D-erythritol 4-phosphate + CTP + H(+) = 4-CDP-2-C-methyl-D-erythritol + diphosphate. Its pathway is isoprenoid biosynthesis; isopentenyl diphosphate biosynthesis via DXP pathway; isopentenyl diphosphate from 1-deoxy-D-xylulose 5-phosphate: step 2/6. In terms of biological role, catalyzes the formation of 4-diphosphocytidyl-2-C-methyl-D-erythritol from CTP and 2-C-methyl-D-erythritol 4-phosphate (MEP). In Baumannia cicadellinicola subsp. Homalodisca coagulata, this protein is 2-C-methyl-D-erythritol 4-phosphate cytidylyltransferase.